A 237-amino-acid polypeptide reads, in one-letter code: MLGGSLGSRLLRGVGGTRGQFRARGVREGGAAMAAGESMAQRMVWVDLEMTGLDIEKDQIIEMACLITDSDLNILAEGPNLIIKQPDELLDSMSDWCKEHHGKSGLTKAVKESTMTLQQAEYEFLSFVRQQTPPGLCPLAGNSVHADKKFLDKYMPQFMKHLHYRIIDVSTVKELCRRWYPEEYEFAPKKAASHRALDDISESIKELQFYRNNIFKKKTDEKKRKIIENGENEKTVS.

The N-terminal 25 residues, 1–25, are a transit peptide targeting the mitochondrion; it reads MLGGSLGSRLLRGVGGTRGQFRARG. One can recognise an Exonuclease domain in the interval 43-207; the sequence is MVWVDLEMTG…DDISESIKEL (165 aa). 2 residues coordinate Mg(2+): Asp-47 and Glu-49. A Phosphoserine modification is found at Ser-92. At Tyr-122 the chain carries Phosphotyrosine. Asp-147 contacts Mg(2+). N6-acetyllysine is present on Lys-173. The active site involves His-194. Position 199 (Asp-199) interacts with Mg(2+).

The protein belongs to the oligoribonuclease family. In terms of assembly, homodimer. Homotetramer. Mn(2+) is required as a cofactor. Mg(2+) serves as cofactor.

It localises to the mitochondrion intermembrane space. The protein localises to the mitochondrion matrix. Its subcellular location is the mitochondrion. The protein resides in the cytoplasm. It is found in the nucleus. 3'-to-5'exoribonuclease that preferentially degrades DNA and RNA oligonucleotides composed of only two nucleotides. Binds and degrades longer oligonucleotides with a lower affinity. Plays dual roles in mitochondria, scavenging nanoRNAs (small RNA oligonucleotides of &lt;5 nucleotides) that are produced by the degradosome and clearing short RNAs that are generated by RNA processing. Essential for correct initiation of mitochondrial transcription, degrading mitochondrial RNA dinucleotides to prevent RNA-primed transcription at non-canonical sites in the mitochondrial genome. Essential for embryonic development. The protein is Oligoribonuclease, mitochondrial (REXO2) of Bos taurus (Bovine).